The chain runs to 209 residues: MMQEQQPQSTEKRGWLSLRLWSVAGISIALLSACFIVSCVVTYHFTYGETGKRLSELHSYHSSLTCFSEGTKVPAWGCCPASWKSFGSSCYFISSEEKVWSKSEQNCVEMGAHLVVFNTEAEQNFIVQQLNESFSYFLGLSDPQGNNNWQWIDKTPYEKNVRFWHLGEPNHSAEQCASIVFWKPTGWGWNDVICETRRNSICEMNKIYL.

The Cytoplasmic portion of the chain corresponds to 1 to 20 (MMQEQQPQSTEKRGWLSLRL). Residues 21–41 (WSVAGISIALLSACFIVSCVV) traverse the membrane as a helical; Signal-anchor for type II membrane protein segment. Topologically, residues 42–209 (TYHFTYGETG…SICEMNKIYL (168 aa)) are extracellular. Disulfide bonds link C66–C78, C79–C90, C107–C202, and C176–C194. Positions 86–203 (FGSSCYFISS…CETRRNSICE (118 aa)) constitute a C-type lectin domain. Ca(2+) contacts are provided by V116, N118, and E122. The N-linked (GlcNAc...) asparagine glycan is linked to N131. Residues E168, N170, and E174 each contribute to the Ca(2+) site. Residues 168–170 (EPN), E174, W182, 190–191 (ND), and R198 each bind alpha-D-mannopyranose. Residue N170 is glycosylated (N-linked (GlcNAc...) asparagine). Positions 190 and 191 each coordinate Ca(2+). A Ca(2+)-binding site is contributed by E203.

As to quaternary structure, associated with FCER1G. Heterodimer with CLEC4D; this heterodimer forms a pattern recognition receptor (PRR) against fungal infection. As to expression, expressed in lung, spleen, lymph node, leukocytes, bone marrow, tonsils and dendritic cells. Strongly expressed in purified monocytes and weakly in B-cells. In peripheral blood cells, preferentially expressed in plasmacytoids rather than myeloids.

Its subcellular location is the cell membrane. In terms of biological role, calcium-dependent lectin that acts as a pattern recognition receptor (PRR) of the innate immune system: specifically recognizes and binds alpha-mannans on C.albicans hypheas. Binding of C.albicans alpha-mannans to this receptor complex leads to phosphorylation of the immunoreceptor tyrosine-based activation motif (ITAM) of FCER1G, triggering activation of SYK, CARD9 and NF-kappa-B, consequently driving maturation of antigen-presenting cells and shaping antigen-specific priming of T-cells toward effector T-helper 1 and T-helper 17 cell subtypes. Recognizes also, in a mannose-dependent manner, allergens from house dust mite and fungi, by promoting cysteinyl leukotriene production. Recognizes soluble elements from the eggs of Shistosoma mansoni altering adaptive immune responses. The chain is C-type lectin domain family 6 member A from Homo sapiens (Human).